Reading from the N-terminus, the 321-residue chain is Phospho-N-acetylmuramoyl-pentapeptide-transferase (321 aa).

10 helical membrane-spanning segments follow: residues 1–21 (MIYV…PILI), 49–69 (TMGG…AIIF), 77–97 (ILLL…DYII), 112–132 (FLAQ…FNMI), 140–160 (IPFT…IVFW), 176–196 (GLAT…SFML), 200–220 (AVGT…IYNV), 225–245 (VFMG…VSIM), 250–270 (ISLI…ILQV), and 300–320 (VVSV…WIGV).

This sequence belongs to the glycosyltransferase 4 family. MraY subfamily. Requires Mg(2+) as cofactor.

The protein localises to the cell membrane. The catalysed reaction is UDP-N-acetyl-alpha-D-muramoyl-L-alanyl-gamma-D-glutamyl-L-lysyl-D-alanyl-D-alanine + di-trans,octa-cis-undecaprenyl phosphate = Mur2Ac(oyl-L-Ala-gamma-D-Glu-L-Lys-D-Ala-D-Ala)-di-trans,octa-cis-undecaprenyl diphosphate + UMP. The protein operates within cell wall biogenesis; peptidoglycan biosynthesis. Functionally, catalyzes the initial step of the lipid cycle reactions in the biosynthesis of the cell wall peptidoglycan: transfers peptidoglycan precursor phospho-MurNAc-pentapeptide from UDP-MurNAc-pentapeptide onto the lipid carrier undecaprenyl phosphate, yielding undecaprenyl-pyrophosphoryl-MurNAc-pentapeptide, known as lipid I. The polypeptide is Phospho-N-acetylmuramoyl-pentapeptide-transferase (Staphylococcus carnosus (strain TM300)).